We begin with the raw amino-acid sequence, 110 residues long: Body wall hemoglobin (110 aa).

Residues 2-110 (VNWAAVVDAF…GAVDAIISHF (109 aa)) enclose the Globin domain. Heme is bound at residue histidine 70.

Belongs to the globin family. In terms of assembly, homotetramer.

The protein is Body wall hemoglobin of Cerebratulus lacteus (Milky ribbon worm).